Consider the following 453-residue polypeptide: Argininosuccinate lyase (453 aa).

Belongs to the lyase 1 family. Argininosuccinate lyase subfamily.

Its subcellular location is the cytoplasm. It catalyses the reaction 2-(N(omega)-L-arginino)succinate = fumarate + L-arginine. Its pathway is amino-acid biosynthesis; L-arginine biosynthesis; L-arginine from L-ornithine and carbamoyl phosphate: step 3/3. This chain is Argininosuccinate lyase, found in Shewanella loihica (strain ATCC BAA-1088 / PV-4).